The following is a 680-amino-acid chain: Probable galacturonosyltransferase 3 (680 aa).

Over 1 to 6 the chain is Cytoplasmic; the sequence is MTTFST. The chain crosses the membrane as a helical; Signal-anchor for type II membrane protein span at residues 7–27; the sequence is CAAFLSLVVVLHAVHVGGAIL. Residues 28 to 680 lie on the Lumenal side of the membrane; the sequence is ESQAPHRELK…PYLRRCDINE (653 aa). The segment at 118–146 is disordered; it reads SFQNDTGMEDNASHSTTNQTDESENQFPN. N-linked (GlcNAc...) asparagine glycosylation is found at Asn121, Asn128, Asn135, Asn239, Asn386, Asn438, Asn545, Asn578, Asn610, and Asn631. Residues 130-145 show a composition bias toward polar residues; that stretch reads SHSTTNQTDESENQFP.

The protein belongs to the glycosyltransferase 8 family. In terms of tissue distribution, expressed in roots, inflorescences, siliques, leaves and stems.

The protein localises to the golgi apparatus membrane. It participates in glycan metabolism; pectin biosynthesis. May be involved in pectin and/or xylans biosynthesis in cell walls. This is Probable galacturonosyltransferase 3 (GAUT3) from Arabidopsis thaliana (Mouse-ear cress).